Reading from the N-terminus, the 398-residue chain is S-adenosylmethionine synthase (398 aa).

136–141 (GTGSSD) lines the ATP pocket.

Belongs to the AdoMet synthase 2 family. Mg(2+) is required as a cofactor.

It catalyses the reaction L-methionine + ATP + H2O = S-adenosyl-L-methionine + phosphate + diphosphate. The protein operates within amino-acid biosynthesis; S-adenosyl-L-methionine biosynthesis; S-adenosyl-L-methionine from L-methionine: step 1/1. In terms of biological role, catalyzes the formation of S-adenosylmethionine from methionine and ATP. The polypeptide is S-adenosylmethionine synthase (Methanosarcina acetivorans (strain ATCC 35395 / DSM 2834 / JCM 12185 / C2A)).